The chain runs to 231 residues: Orotidine 5'-phosphate decarboxylase (231 aa).

Residues D11, K33, 60-69 (DLKFHDIPNT), T120, R181, Q190, G210, and R211 each bind substrate. The active-site Proton donor is K62.

The protein belongs to the OMP decarboxylase family. Type 1 subfamily. Homodimer.

It catalyses the reaction orotidine 5'-phosphate + H(+) = UMP + CO2. It participates in pyrimidine metabolism; UMP biosynthesis via de novo pathway; UMP from orotate: step 2/2. In terms of biological role, catalyzes the decarboxylation of orotidine 5'-monophosphate (OMP) to uridine 5'-monophosphate (UMP). This chain is Orotidine 5'-phosphate decarboxylase, found in Vibrio atlanticus (strain LGP32) (Vibrio splendidus (strain Mel32)).